The sequence spans 447 residues: MPSFAALLPVILLGAGAVTAMLAAPRLPGLARWIAGFALVAASVALALRLGAPDGLSVLLADDRMSRLTGLVVCLSGIGSLAFLRPDGPSKEGPALLLLATLGGVVLTGAVHAASLFLGLELITLALVALFVLPLDRPALEAGYKFLILGAAAAATLLMGLALGHAATGSLALEAFGGREALLTFAAALLLAGLAFKLALVPFHMWTPDAFTGAPGAAAAFAGAASKVAVVTALVRLDAVGLPQVWALGLGTFAGVSILLGNLAALRQDGVARMLGYSSVGHAGYIAAALATGAASAPAAALFYIVTYAPALLAALCVAALIGRATRISDLRGIVWRRPLAGAAMAAALVSLAGLPVSAGFFGKYVIFTALIEGRAWALLALAIAGSALGAYYYLRFVALIFRRAPDPADPAVRWPERTLLGAATAIILLLGIRPDLLLDQIRAALP.

The next 13 membrane-spanning stretches (helical) occupy residues 4-24, 27-47, 68-88, 92-112, 113-133, 146-166, 181-201, 215-235, 245-265, 280-300, 302-322, 342-362, and 376-395; these read FAAL…MLAA, LPGL…VALA, LTGL…RPDG, EGPA…GAVH, AASL…LFVL, FLIL…LGHA, ALLT…LALV, PGAA…TALV, VWAL…NLAA, VGHA…APAA, LFYI…AALI, GAAM…AGFF, and AWAL…YYYL.

It belongs to the complex I subunit 2 family. NDH-1 is composed of 14 different subunits. Subunits NuoA, H, J, K, L, M, N constitute the membrane sector of the complex.

The protein localises to the cell inner membrane. It catalyses the reaction a quinone + NADH + 5 H(+)(in) = a quinol + NAD(+) + 4 H(+)(out). Functionally, NDH-1 shuttles electrons from NADH, via FMN and iron-sulfur (Fe-S) centers, to quinones in the respiratory chain. The immediate electron acceptor for the enzyme in this species is believed to be ubiquinone. Couples the redox reaction to proton translocation (for every two electrons transferred, four hydrogen ions are translocated across the cytoplasmic membrane), and thus conserves the redox energy in a proton gradient. This Cereibacter sphaeroides (strain ATCC 17025 / ATH 2.4.3) (Rhodobacter sphaeroides) protein is NADH-quinone oxidoreductase subunit N.